Reading from the N-terminus, the 38-residue chain is Photosystem II reaction center protein L (38 aa).

A helical membrane pass occupies residues 17-37 (SLFWGLLLIFVLAVLFSSYFF).

It belongs to the PsbL family. PSII is composed of 1 copy each of membrane proteins PsbA, PsbB, PsbC, PsbD, PsbE, PsbF, PsbH, PsbI, PsbJ, PsbK, PsbL, PsbM, PsbT, PsbX, PsbY, PsbZ, Psb30/Ycf12, at least 3 peripheral proteins of the oxygen-evolving complex and a large number of cofactors. It forms dimeric complexes.

It is found in the plastid. The protein resides in the chloroplast thylakoid membrane. Functionally, one of the components of the core complex of photosystem II (PSII). PSII is a light-driven water:plastoquinone oxidoreductase that uses light energy to abstract electrons from H(2)O, generating O(2) and a proton gradient subsequently used for ATP formation. It consists of a core antenna complex that captures photons, and an electron transfer chain that converts photonic excitation into a charge separation. This subunit is found at the monomer-monomer interface and is required for correct PSII assembly and/or dimerization. This is Photosystem II reaction center protein L from Gracilaria tenuistipitata var. liui (Red alga).